We begin with the raw amino-acid sequence, 236 residues long: Phosphoribosylaminoimidazole-succinocarboxamide synthase (236 aa).

The protein belongs to the SAICAR synthetase family.

It catalyses the reaction 5-amino-1-(5-phospho-D-ribosyl)imidazole-4-carboxylate + L-aspartate + ATP = (2S)-2-[5-amino-1-(5-phospho-beta-D-ribosyl)imidazole-4-carboxamido]succinate + ADP + phosphate + 2 H(+). Its pathway is purine metabolism; IMP biosynthesis via de novo pathway; 5-amino-1-(5-phospho-D-ribosyl)imidazole-4-carboxamide from 5-amino-1-(5-phospho-D-ribosyl)imidazole-4-carboxylate: step 1/2. In Pseudomonas paraeruginosa (strain DSM 24068 / PA7) (Pseudomonas aeruginosa (strain PA7)), this protein is Phosphoribosylaminoimidazole-succinocarboxamide synthase.